Consider the following 111-residue polypeptide: uncharacterized protein (111 aa).

This is an uncharacterized protein from Aquifex aeolicus (strain VF5).